The following is a 262-amino-acid chain: Phosphoribosylformylglycinamidine synthase subunit PurQ (262 aa).

The Glutamine amidotransferase type-1 domain maps to 2-238 (RIAVIQFPGT…FAWQLPRKHP (237 aa)). The active-site Nucleophile is the C87. Active-site residues include H223 and E225.

Part of the FGAM synthase complex composed of 1 PurL, 1 PurQ and 2 PurS subunits.

Its subcellular location is the cytoplasm. The catalysed reaction is N(2)-formyl-N(1)-(5-phospho-beta-D-ribosyl)glycinamide + L-glutamine + ATP + H2O = 2-formamido-N(1)-(5-O-phospho-beta-D-ribosyl)acetamidine + L-glutamate + ADP + phosphate + H(+). It catalyses the reaction L-glutamine + H2O = L-glutamate + NH4(+). It functions in the pathway purine metabolism; IMP biosynthesis via de novo pathway; 5-amino-1-(5-phospho-D-ribosyl)imidazole from N(2)-formyl-N(1)-(5-phospho-D-ribosyl)glycinamide: step 1/2. Part of the phosphoribosylformylglycinamidine synthase complex involved in the purines biosynthetic pathway. Catalyzes the ATP-dependent conversion of formylglycinamide ribonucleotide (FGAR) and glutamine to yield formylglycinamidine ribonucleotide (FGAM) and glutamate. The FGAM synthase complex is composed of three subunits. PurQ produces an ammonia molecule by converting glutamine to glutamate. PurL transfers the ammonia molecule to FGAR to form FGAM in an ATP-dependent manner. PurS interacts with PurQ and PurL and is thought to assist in the transfer of the ammonia molecule from PurQ to PurL. The chain is Phosphoribosylformylglycinamidine synthase subunit PurQ from Methanothrix thermoacetophila (strain DSM 6194 / JCM 14653 / NBRC 101360 / PT) (Methanosaeta thermophila).